The chain runs to 398 residues: Succinate--CoA ligase [ADP-forming] subunit beta (398 aa).

Positions 9 to 254 constitute an ATP-grasp domain; the sequence is KAVLREFGVP…ETEEDAKEIE (246 aa). Residues Lys-46, 53–55, Glu-109, Ser-112, and Glu-117 each bind ATP; that span reads GRG. Mg(2+) is bound by residues Asn-209 and Asp-223. Substrate-binding positions include Asn-274 and 331–333; that span reads GIM.

It belongs to the succinate/malate CoA ligase beta subunit family. As to quaternary structure, heterotetramer of two alpha and two beta subunits. The cofactor is Mg(2+).

It catalyses the reaction succinate + ATP + CoA = succinyl-CoA + ADP + phosphate. It carries out the reaction GTP + succinate + CoA = succinyl-CoA + GDP + phosphate. Its pathway is carbohydrate metabolism; tricarboxylic acid cycle; succinate from succinyl-CoA (ligase route): step 1/1. Its function is as follows. Succinyl-CoA synthetase functions in the citric acid cycle (TCA), coupling the hydrolysis of succinyl-CoA to the synthesis of either ATP or GTP and thus represents the only step of substrate-level phosphorylation in the TCA. The beta subunit provides nucleotide specificity of the enzyme and binds the substrate succinate, while the binding sites for coenzyme A and phosphate are found in the alpha subunit. The protein is Succinate--CoA ligase [ADP-forming] subunit beta of Rhodopseudomonas palustris (strain ATCC BAA-98 / CGA009).